Reading from the N-terminus, the 105-residue chain is NADH-quinone oxidoreductase subunit K (105 aa).

The next 3 helical transmembrane spans lie at 9–29, 34–54, and 65–85; these read PNYY…GVLV, IVLF…LVTF, and IIAF…LAII.

It belongs to the complex I subunit 4L family. As to quaternary structure, NDH-1 is composed of 14 different subunits. Subunits NuoA, H, J, K, L, M, N constitute the membrane sector of the complex.

The protein localises to the cell membrane. It catalyses the reaction a quinone + NADH + 5 H(+)(in) = a quinol + NAD(+) + 4 H(+)(out). NDH-1 shuttles electrons from NADH, via FMN and iron-sulfur (Fe-S) centers, to quinones in the respiratory chain. The immediate electron acceptor for the enzyme in this species is believed to be a menaquinone. Couples the redox reaction to proton translocation (for every two electrons transferred, four hydrogen ions are translocated across the cytoplasmic membrane), and thus conserves the redox energy in a proton gradient. This Salinispora arenicola (strain CNS-205) protein is NADH-quinone oxidoreductase subunit K.